The primary structure comprises 180 residues: Pro-glucagon (180 aa).

The signal sequence occupies residues 1-20 (MKSIYFVAGLFVMLVQGSWQ). The interval 26–56 (TEEKSRSFSAPQTEPLNDLDQMNEDKRHSQG) is disordered. Ser54 carries the phosphoserine modification. A propeptide spanning residues 84–89 (NKNNIA) is cleaved from the precursor. Residues Ser105 and Ser108 each carry the phosphoserine modification. Arg127 carries the arginine amide modification. Positions 131 to 145 (DFPEEVAIVEEFRRR) are excised as a propeptide. Phosphoserine occurs at positions 150 and 152.

It belongs to the glucagon family. Post-translationally, proglucagon is post-translationally processed in a tissue-specific manner in pancreatic A cells and intestinal L cells. In pancreatic A cells, the major bioactive hormone is glucagon cleaved by PCSK2/PC2. In the intestinal L cells PCSK1/PC1 liberates GLP-1, GLP-2, glicentin and oxyntomodulin. GLP-1 is further N-terminally truncated by post-translational processing in the intestinal L cells resulting in GLP-1(7-37) GLP-1-(7-36)amide. The C-terminal amidation is neither important for the metabolism of GLP-1 nor for its effects on the endocrine pancreas. As to expression, glucagon is secreted in the A cells of the islets of Langerhans. GLP-1, GLP-2, oxyntomodulin and glicentin are secreted from enteroendocrine cells throughout the gastrointestinal tract. GLP-1 and GLP-2 are also secreted in selected neurons in the brain.

It localises to the secreted. In terms of biological role, plays a key role in glucose metabolism and homeostasis. Regulates blood glucose by increasing gluconeogenesis and decreasing glycolysis. A counterregulatory hormone of insulin, raises plasma glucose levels in response to insulin-induced hypoglycemia. Plays an important role in initiating and maintaining hyperglycemic conditions in diabetes. Functionally, potent stimulator of glucose-dependent insulin release. Also stimulates insulin release in response to IL6. Plays important roles on gastric motility and the suppression of plasma glucagon levels. May be involved in the suppression of satiety and stimulation of glucose disposal in peripheral tissues, independent of the actions of insulin. Has growth-promoting activities on intestinal epithelium. May also regulate the hypothalamic pituitary axis (HPA) via effects on LH, TSH, CRH, oxytocin, and vasopressin secretion. Increases islet mass through stimulation of islet neogenesis and pancreatic beta cell proliferation. Inhibits beta cell apoptosis. Stimulates intestinal growth and up-regulates villus height in the small intestine, concomitant with increased crypt cell proliferation and decreased enterocyte apoptosis. The gastrointestinal tract, from the stomach to the colon is the principal target for GLP-2 action. Plays a key role in nutrient homeostasis, enhancing nutrient assimilation through enhanced gastrointestinal function, as well as increasing nutrient disposal. Stimulates intestinal glucose transport and decreases mucosal permeability. Its function is as follows. Significantly reduces food intake. Inhibits gastric emptying in humans. Suppression of gastric emptying may lead to increased gastric distension, which may contribute to satiety by causing a sensation of fullness. In terms of biological role, may modulate gastric acid secretion and the gastro-pyloro-duodenal activity. May play an important role in intestinal mucosal growth in the early period of life. This Canis lupus familiaris (Dog) protein is Pro-glucagon (GCG).